We begin with the raw amino-acid sequence, 140 residues long: Large ribosomal subunit protein bL17 (140 aa).

This sequence belongs to the bacterial ribosomal protein bL17 family. In terms of assembly, part of the 50S ribosomal subunit. Contacts protein L32.

The polypeptide is Large ribosomal subunit protein bL17 (Rhizobium etli (strain ATCC 51251 / DSM 11541 / JCM 21823 / NBRC 15573 / CFN 42)).